The following is a 388-amino-acid chain: Succinate--CoA ligase [ADP-forming] subunit beta (388 aa).

In terms of domain architecture, ATP-grasp spans 9–244; it reads KQLFARYGLP…QSQEDPREAQ (236 aa). ATP-binding positions include lysine 46, 53 to 55, glutamate 99, threonine 102, and glutamate 107; that span reads GRG. Residues asparagine 199 and aspartate 213 each contribute to the Mg(2+) site. Residues asparagine 264 and 321-323 each bind substrate; that span reads GIV.

It belongs to the succinate/malate CoA ligase beta subunit family. Heterotetramer of two alpha and two beta subunits. Requires Mg(2+) as cofactor.

It catalyses the reaction succinate + ATP + CoA = succinyl-CoA + ADP + phosphate. The catalysed reaction is GTP + succinate + CoA = succinyl-CoA + GDP + phosphate. Its pathway is carbohydrate metabolism; tricarboxylic acid cycle; succinate from succinyl-CoA (ligase route): step 1/1. In terms of biological role, succinyl-CoA synthetase functions in the citric acid cycle (TCA), coupling the hydrolysis of succinyl-CoA to the synthesis of either ATP or GTP and thus represents the only step of substrate-level phosphorylation in the TCA. The beta subunit provides nucleotide specificity of the enzyme and binds the substrate succinate, while the binding sites for coenzyme A and phosphate are found in the alpha subunit. In Salmonella choleraesuis (strain SC-B67), this protein is Succinate--CoA ligase [ADP-forming] subunit beta.